A 918-amino-acid chain; its full sequence is Probable UDP-N-acetylglucosamine--peptide N-acetylglucosaminyltransferase SPINDLY (918 aa).

11 TPR repeats span residues 34–66 (GKEA…SKNV), 67–99 (EAHI…DPHN), 101–132 (CALT…DPSY), 140–171 (ATVL…DPHY), 172–205 (APAC…SPTY), 207–238 (DAYC…NNMG), 239–271 (IALT…NWHY), 273–305 (DAMY…NPHC), 306–339 (AEAC…KPNF), 341–373 (QSLN…NPTY), and 374–407 (AEAY…DPDS). The segment at 408 to 918 (RNAGQNRLLA…LNCGDQCFRV (511 aa)) is catalytic region. A compositionally biased stretch (polar residues) spans 843 to 853 (QLHQQPNTSPQ). The interval 843-877 (QLHQQPNTSPQKLVKDEPADDASGPEHGPASKDNP) is disordered.

This sequence belongs to the glycosyltransferase 41 family. O-GlcNAc transferase subfamily.

The protein localises to the nucleus. The enzyme catalyses L-seryl-[protein] + UDP-N-acetyl-alpha-D-glucosamine = 3-O-(N-acetyl-beta-D-glucosaminyl)-L-seryl-[protein] + UDP + H(+). It catalyses the reaction L-threonyl-[protein] + UDP-N-acetyl-alpha-D-glucosamine = 3-O-(N-acetyl-beta-D-glucosaminyl)-L-threonyl-[protein] + UDP + H(+). It functions in the pathway protein modification; protein glycosylation. In terms of biological role, probable O-linked N-acetylglucosamine transferase (OGT) involved in various processes such as gibberellin (GA) signaling pathway. OGTs catalyze the addition of nucleotide-activated sugars directly onto the polypeptide through O-glycosidic linkage with the hydroxyl of serine or threonine. Probably acts by adding O-linked sugars to yet unknown proteins. May function as a negative regulator of GA signal transduction during vernalization, inhibiting adventitious shoot elongation during vernalization. The protein is Probable UDP-N-acetylglucosamine--peptide N-acetylglucosaminyltransferase SPINDLY (SPY) of Eustoma exaltatum subsp. russellianum (Bluebells).